The primary structure comprises 349 residues: 5-deoxyribose 1-phosphate isomerase (349 aa).

Substrate-binding positions include Arg-49 to Ala-51, Arg-92, and Gln-199. Asp-240 acts as the Proton donor in catalysis. Position 250-251 (Asn-250–Lys-251) interacts with substrate.

The protein belongs to the EIF-2B alpha/beta/delta subunits family. DrdI subfamily.

It catalyses the reaction 5-deoxy-alpha-D-ribose 1-phosphate = 5-deoxy-D-ribulose 1-phosphate. The protein operates within carbohydrate degradation. Functionally, catalyzes the isomerization of 5-deoxy-alpha-D-ribose 1-phosphate to 5-deoxy-D-ribulose 1-phosphate, as part of a 5-deoxyribose salvage pathway that recycles this toxic radical SAM enzyme by-product to mainstream metabolites. In Clostridium botulinum (strain Okra / Type B1), this protein is 5-deoxyribose 1-phosphate isomerase.